Here is a 439-residue protein sequence, read N- to C-terminus: Keratin, type I cytoskeletal 40 (439 aa).

The interval 1-89 (MASDGSPSCC…CEEGSFNSNE (89 aa)) is head. Residues 89–400 (EKETMQFLND…GLLEKEDSRL (312 aa)) form the IF rod domain. Residues 90-124 (KETMQFLNDRLASYLERVRSLEENNAELECRIREQ) form a coil 1A region. The tract at residues 125–135 (CEPNAPLVCPD) is linker 1. Positions 136–236 (YQRYFDTIEE…HEEEVNLLRE (101 aa)) are coil 1B. Residues 237–252 (QLGDRLSVELDTAPTV) are linker 12. Residues 253–396 (DLNKVLDEMR…NTYRGLLEKE (144 aa)) form a coil 2 region. The tract at residues 397–439 (DSRLPCNPGSGAPMPNSTCEPCSNSMCEPCSAYVICTVENCCA) is tail.

Belongs to the intermediate filament family. As to quaternary structure, heterotetramer of two type I and two type II keratins.

May play a role in late hair differentiation. The protein is Keratin, type I cytoskeletal 40 (Krt40) of Mus musculus (Mouse).